The chain runs to 426 residues: Serine--tRNA ligase (426 aa).

An L-serine-binding site is contributed by 235-237; the sequence is TAE. 266–268 is an ATP binding site; it reads RRE. Position 289 (Glu-289) interacts with L-serine. 353–356 lines the ATP pocket; the sequence is EISS. Ser-389 provides a ligand contact to L-serine.

Belongs to the class-II aminoacyl-tRNA synthetase family. Type-1 seryl-tRNA synthetase subfamily. In terms of assembly, homodimer. The tRNA molecule binds across the dimer.

The protein resides in the cytoplasm. The catalysed reaction is tRNA(Ser) + L-serine + ATP = L-seryl-tRNA(Ser) + AMP + diphosphate + H(+). It catalyses the reaction tRNA(Sec) + L-serine + ATP = L-seryl-tRNA(Sec) + AMP + diphosphate + H(+). It functions in the pathway aminoacyl-tRNA biosynthesis; selenocysteinyl-tRNA(Sec) biosynthesis; L-seryl-tRNA(Sec) from L-serine and tRNA(Sec): step 1/1. Functionally, catalyzes the attachment of serine to tRNA(Ser). Is also able to aminoacylate tRNA(Sec) with serine, to form the misacylated tRNA L-seryl-tRNA(Sec), which will be further converted into selenocysteinyl-tRNA(Sec). The chain is Serine--tRNA ligase from Nostoc sp. (strain PCC 7120 / SAG 25.82 / UTEX 2576).